A 266-amino-acid polypeptide reads, in one-letter code: Protein crossbronx-like (266 aa).

A UBC core domain is found at 15–178 (KQGYHILAEY…VQEQAIASRN (164 aa)).

It belongs to the ubiquitin-conjugating enzyme family. FTS subfamily.

The sequence is that of Protein crossbronx-like from Drosophila erecta (Fruit fly).